The following is an 87-amino-acid chain: Tachykinin-1 (87 aa).

Positions 1–22 (MIRVGLILCCIFIAGVFEASSA) are cleaved as a signal peptide. A propeptide spanning residues 23–37 (DDMLTAHNLIKRSEV) is cleaved from the precursor. Methionine amide is present on M49. The propeptide occupies 52–87 (SEELTRRLIQHPGSMSETSKRGPPKKVSRRPYILKK). Residues 61 to 87 (QHPGSMSETSKRGPPKKVSRRPYILKK) are disordered. The segment covering 73–87 (GPPKKVSRRPYILKK) has biased composition (basic residues).

This sequence belongs to the tachykinin family. Expressed in the posterior salivary gland and more specifically in the mucus-secreting gland cells.

The protein localises to the secreted. Functionally, tachykinins are active peptides which excite neurons, evoke behavioral responses, are potent vasodilators and secretagogues, and contract (directly or indirectly) many smooth muscles. The polypeptide is Tachykinin-1 (Octopus vulgaris (Common octopus)).